The sequence spans 338 residues: MKTDIVIIGAGPVGIFTAFQAGMLDMRCHIIDVLDQAGGQCTALYPEKPIYDIPGYPVITAQKLIEQLMEQSSPFKPVYHLSQKVEKISNNEGESFTVITNIGTEVKCKAVIVAAGNGMFKPNRPPLSGILEYENKSVFYSVNKISDFQDKTIVIAGGGDSAADWTVELSKVAKKIYVIHRRKEFRCTPETRNKLESLEIDGKIELVVPYQLHELAGGNGQLSAVIVKNIASKEEKEISADFLLPFFGLSMNLGPINNWGIQLEHSRIVVDPATLKTSRDRIYAIGDIAIYSGKLKLILNGFAESAMACYDIYKVIHNSPVNFQYSTSKGIHGKEKLP.

Positions 32, 40, 45, 85, 120, 287, and 327 each coordinate FAD.

Belongs to the ferredoxin--NADP reductase type 2 family. In terms of assembly, homodimer. FAD is required as a cofactor.

The catalysed reaction is 2 reduced [2Fe-2S]-[ferredoxin] + NADP(+) + H(+) = 2 oxidized [2Fe-2S]-[ferredoxin] + NADPH. In Wolbachia pipientis wMel, this protein is Ferredoxin--NADP reductase.